Consider the following 130-residue polypeptide: Protein ApaG (130 aa).

The ApaG domain maps to 3–127 (SAVTQDIQIT…FSLDSPFVRR (125 aa)).

The sequence is that of Protein ApaG from Methylocella silvestris (strain DSM 15510 / CIP 108128 / LMG 27833 / NCIMB 13906 / BL2).